The primary structure comprises 302 residues: uncharacterized protein (302 aa).

Its function is as follows. May be a membrane-bound protein, possibly involved in IAA or IAA-Lysine transport. This is an uncharacterized protein from Pseudomonas savastanoi (Pseudomonas syringae pv. savastanoi).